Reading from the N-terminus, the 81-residue chain is Small ribosomal subunit protein bS18 (81 aa).

It belongs to the bacterial ribosomal protein bS18 family. As to quaternary structure, part of the 30S ribosomal subunit. Forms a tight heterodimer with protein bS6.

Functionally, binds as a heterodimer with protein bS6 to the central domain of the 16S rRNA, where it helps stabilize the platform of the 30S subunit. The sequence is that of Small ribosomal subunit protein bS18 from Chlamydia muridarum (strain MoPn / Nigg).